The chain runs to 127 residues: MAIVGLGTDIVEIERITAHVARSGDKLAKRVLTEAEFEIYQQHSQPSRYLAKRFAAKEAAAKALGTGIGRGVSFQHIHIGNTPDGAPTIDFTQGAQQRLALLNGVVGHISIADEKSYAIATVILESR.

Residues aspartate 9 and glutamate 58 each contribute to the Mg(2+) site.

The protein belongs to the P-Pant transferase superfamily. AcpS family. Mg(2+) serves as cofactor.

Its subcellular location is the cytoplasm. The enzyme catalyses apo-[ACP] + CoA = holo-[ACP] + adenosine 3',5'-bisphosphate + H(+). Transfers the 4'-phosphopantetheine moiety from coenzyme A to a Ser of acyl-carrier-protein. The protein is Holo-[acyl-carrier-protein] synthase of Shewanella sp. (strain MR-7).